The sequence spans 190 residues: Large ribosomal subunit protein uL22 (190 aa).

Positions 111-190 are disordered; sequence SVQSTKAKAK…TKKKTEGEEK (80 aa). Basic and acidic residues predominate over residues 125-147; sequence IKSEDSKNSLKVTESKADSKVDA. A compositionally biased stretch (low complexity) spans 167-178; it reads AKVATTKSTATR.

This sequence belongs to the universal ribosomal protein uL22 family. As to quaternary structure, part of the 50S ribosomal subunit.

Functionally, this protein binds specifically to 23S rRNA; its binding is stimulated by other ribosomal proteins, e.g. L4, L17, and L20. It is important during the early stages of 50S assembly. It makes multiple contacts with different domains of the 23S rRNA in the assembled 50S subunit and ribosome. Its function is as follows. The globular domain of the protein is located near the polypeptide exit tunnel on the outside of the subunit, while an extended beta-hairpin is found that lines the wall of the exit tunnel in the center of the 70S ribosome. The polypeptide is Large ribosomal subunit protein uL22 (Helicobacter hepaticus (strain ATCC 51449 / 3B1)).